Consider the following 439-residue polypeptide: Tol-Pal system protein TolB (439 aa).

The N-terminal stretch at 1–22 (MKKPLRWLAALTVLLLPLSALA) is a signal peptide.

The protein belongs to the TolB family. As to quaternary structure, the Tol-Pal system is composed of five core proteins: the inner membrane proteins TolA, TolQ and TolR, the periplasmic protein TolB and the outer membrane protein Pal. They form a network linking the inner and outer membranes and the peptidoglycan layer.

It is found in the periplasm. Part of the Tol-Pal system, which plays a role in outer membrane invagination during cell division and is important for maintaining outer membrane integrity. This is Tol-Pal system protein TolB from Xanthomonas oryzae pv. oryzae (strain KACC10331 / KXO85).